We begin with the raw amino-acid sequence, 595 residues long: Actin-histidine N-methyltransferase (595 aa).

The disordered stretch occupies residues 1-22 (MGKKSRVKTQKSGTGATATVSP). Over residues 10-20 (QKSGTGATATV) the composition is skewed to polar residues. S-adenosyl-L-methionine is bound by residues Arg-75, 104–106 (EGF), Arg-254, 275–279 (DMCNH), and 325–327 (SGF). One can recognise an SET domain in the interval 94–314 (EGFEMVNFKE…AGEQIYIFYG (221 aa)). Ser-513 carries the phosphoserine modification. A compositionally biased stretch (polar residues) spans 549 to 563 (ENGLVNGENSIPNGT). The interval 549–595 (ENGLVNGENSIPNGTRSEDENLNQEESKRAVEDAKGSSSDRADAVKE) is disordered. Residues 573-595 (EESKRAVEDAKGSSSDRADAVKE) are compositionally biased toward basic and acidic residues.

The protein belongs to the class V-like SAM-binding methyltransferase superfamily. SETD3 actin-histidine methyltransferase family. In terms of assembly, interacts with MYOD1. Post-translationally, phosphorylated by GSK3B, which is required for recognition by the SCF(FBXW7) complex and subsequent degradation. In terms of processing, ubiquitinated by the SCF(FBXW7) complex following phosphorylation by GSK3B, leading to its degradation by the proteasome.

The protein resides in the cytoplasm. It localises to the nucleus. The catalysed reaction is L-histidyl-[protein] + S-adenosyl-L-methionine = N(tele)-methyl-L-histidyl-[protein] + S-adenosyl-L-homocysteine + H(+). Protein-histidine N-methyltransferase that specifically mediates 3-methylhistidine (tele-methylhistidine) methylation of actin at 'His-73'. Histidine methylation of actin is required for smooth muscle contraction of the laboring uterus during delivery. Does not have protein-lysine N-methyltransferase activity and probably only catalyzes histidine methylation of actin. The protein is Actin-histidine N-methyltransferase of Callithrix jacchus (White-tufted-ear marmoset).